Reading from the N-terminus, the 568-residue chain is Protein NDNF (568 aa).

Residues 1–19 form the signal peptide; the sequence is MVLLHWCLLWLLFPLSSRT. Fibronectin type-III domains are found at residues 261–331 and 445–564; these read NSGK…VGTF and PSLP…VVKT. N-linked (GlcNAc...) asparagine glycosylation is present at asparagine 322.

Binds heparin and chondroitin sulfate. O-glycosylated; contains heparan sulfate and chondroitin sulfate. Post-translationally, N-glycosylated. As to expression, expressed in neurons along the gonadotropin-releasing hormone (GnRH) expressing neurons migratory route.

The protein resides in the secreted. In terms of biological role, secretory protein that plays a role in various cellular processes. Acts as a chemorepellent acting on gonadotropin-releasing hormone (GnRH) expressing neurons regulating their migration to the hypothalamus. Also promotes neuron migration, growth and survival as well as neurite outgrowth and is involved in the development of the olfactory system. May also act through the regulation of growth factors activity and downstream signaling. Also regulates extracellular matrix assembly and cell adhesiveness. Promotes endothelial cell survival, vessel formation and plays an important role in the process of revascularization through NOS3-dependent mechanisms. The protein is Protein NDNF (NDNF) of Homo sapiens (Human).